We begin with the raw amino-acid sequence, 82 residues long: Large ribosomal subunit protein uL23 (82 aa).

It belongs to the universal ribosomal protein uL23 family. Part of the 50S ribosomal subunit. Contacts protein L29.

Binds to 23S rRNA. One of the proteins that surrounds the polypeptide exit tunnel on the outside of the ribosome. In Methanospirillum hungatei JF-1 (strain ATCC 27890 / DSM 864 / NBRC 100397 / JF-1), this protein is Large ribosomal subunit protein uL23.